A 78-amino-acid chain; its full sequence is Putative membrane protein insertion efficiency factor (78 aa).

It belongs to the UPF0161 family.

It is found in the cell membrane. Could be involved in insertion of integral membrane proteins into the membrane. The chain is Putative membrane protein insertion efficiency factor from Limosilactobacillus reuteri (strain DSM 20016) (Lactobacillus reuteri).